The primary structure comprises 248 residues: MEIKTPSFRVETLDKSKTYHHHEYPQIILGLMGKSELSIEDSSVCLSPGMGYRINANVEHSFSGTSNNQVLVMNLPPFISMTDVEQFGNSYFSLDARTHQLISLLATELKEHADDSLLSQSISNTLQCLIKRSLMLFDEKKVERLNMVLIDNYIEQHLQKKISVAELSSVAFLAQSQFYALFKSQMGITPHQYVLRKRLDLAKQLIAERQKPLSQVAQLCGFSSQSSFSQAFRRLYGMSPTRYQFFIR.

The 99-residue stretch at 148–246 (VLIDNYIEQH…GMSPTRYQFF (99 aa)) folds into the HTH araC/xylS-type domain. 2 DNA-binding regions (H-T-H motif) span residues 165 to 186 (AELSSVAFLAQSQFYALFKSQM) and 213 to 236 (LSQVAQLCGFSSQSSFSQAFRRLY).

Probable transcriptional regulator. Its target gene(s) is not yet known. This Photobacterium leiognathi protein is Probable transcriptional regulator LumQ (lumQ).